Reading from the N-terminus, the 267-residue chain is GTP cyclohydrolase FolE2 (267 aa).

Belongs to the GTP cyclohydrolase IV family.

It carries out the reaction GTP + H2O = 7,8-dihydroneopterin 3'-triphosphate + formate + H(+). It participates in cofactor biosynthesis; 7,8-dihydroneopterin triphosphate biosynthesis; 7,8-dihydroneopterin triphosphate from GTP: step 1/1. Functionally, converts GTP to 7,8-dihydroneopterin triphosphate. The chain is GTP cyclohydrolase FolE2 from Cupriavidus necator (strain ATCC 17699 / DSM 428 / KCTC 22496 / NCIMB 10442 / H16 / Stanier 337) (Ralstonia eutropha).